The primary structure comprises 499 residues: Circadian clock oscillator protein KaiC (499 aa).

KaiC domains lie at 1-243 (MQSS…VSVF) and 257-499 (VRIS…DERA). Residues Gly45, Thr46, Gly47, Lys48, Thr49, Ser85, Lys220, Leu221, Arg222, Thr224, His226, Thr286, Gly287, Thr288, Gly289, Lys290, Thr291, and Leu292 each contribute to the ATP site. Mg(2+) is bound at residue Thr49. Thr291 is a binding site for Mg(2+). Glu314 serves as a coordination point for Mg(2+). Position 327 (Trp327) interacts with ATP. Phosphoserine; by autocatalysis is present on Ser427. A Phosphothreonine; by autocatalysis modification is found at Thr428. ATP-binding residues include Arg447, Lys453, Met454, Arg455, Ser457, His459, and Lys461.

This sequence belongs to the KaiC family. As to quaternary structure, homohexamer; hexamerization is dependent on ATP-binding. Component of the KaiBC complex. KaiC interacts with SasA, activating its autokinase function and leading to RpaA activation. Mg(2+) is required as a cofactor. Phosphorylated on serine and threonine residues by autocatalysis. Has a 4 step phosphorylation cycle; the autokinase acts first on Thr-428, then Ser-427. When Ser-427 is modified KaiC switches to an autophosphatase mode, acting first on phospho-Thr-428 then phospho-Ser-427.

The enzyme catalyses L-seryl-[protein] + ATP = O-phospho-L-seryl-[protein] + ADP + H(+). It carries out the reaction L-threonyl-[protein] + ATP = O-phospho-L-threonyl-[protein] + ADP + H(+). The catalysed reaction is ATP + H2O = ADP + phosphate + H(+). Its function is as follows. Central component of the KaiBC oscillator complex, which constitutes the main circadian regulator in cyanobacteria. Its composition changes during the circadian cycle to control KaiC phosphorylation. Autophosphorylates and has a weak ATPase activity; ATPase activity defines the circadian period. The chain is Circadian clock oscillator protein KaiC from Prochlorococcus marinus (strain MIT 9313).